A 424-amino-acid polypeptide reads, in one-letter code: Formyl-CoA:oxalate CoA-transferase (424 aa).

CoA contacts are provided by residues 17-18 (QS), Arg-38, 96-98 (NFA), Arg-104, and 136-139 (KVYE). The Nucleophile role is filled by Asp-168. A substrate-binding site is contributed by 247-249 (GGQ).

It belongs to the CoA-transferase III family. Frc subfamily. Homodimer.

The enzyme catalyses formyl-CoA + oxalate = oxalyl-CoA + formate. Its pathway is metabolic intermediate degradation; oxalate degradation; CO(2) and formate from oxalate: step 1/2. Functionally, involved in the catabolism of oxalate and in the adapatation to low pH via the induction of the oxalate-dependent acid tolerance response (ATR). Catalyzes the transfer of the CoA moiety from formyl-CoA to oxalate. The polypeptide is Formyl-CoA:oxalate CoA-transferase (Afipia carboxidovorans (strain ATCC 49405 / DSM 1227 / KCTC 32145 / OM5) (Oligotropha carboxidovorans)).